We begin with the raw amino-acid sequence, 519 residues long: Cytochrome P450 52E1 (519 aa).

The next 2 membrane-spanning stretches (helical) occupy residues 10 to 30 (ALGGIALSFLVAYQFIYFYFI) and 44 to 64 (VIVFSFPLGLPALYKFATAML). Heme is bound at residue C479.

It belongs to the cytochrome P450 family. Requires heme as cofactor.

It localises to the membrane. In terms of biological role, together with an NADPH cytochrome P450 the enzyme system catalyzes the terminal hydroxylation as the first step in the assimilation of alkanes and fatty acids. The protein is Cytochrome P450 52E1 (CYP52E1) of Candida apicola (Yeast).